A 263-amino-acid chain; its full sequence is Small ribosomal subunit protein eS4 (263 aa).

One can recognise an S4 RNA-binding domain in the interval 42-105 (LPLIIFLRNR…GENFRLIYDV (64 aa)).

The protein belongs to the eukaryotic ribosomal protein eS4 family. In terms of assembly, component of the small ribosomal subunit. Part of the small subunit (SSU) processome, composed of more than 70 proteins and the RNA chaperone small nucleolar RNA (snoRNA) U3.

It is found in the cytoplasm. Its subcellular location is the nucleus. The protein localises to the nucleolus. Functionally, component of the small ribosomal subunit. The ribosome is a large ribonucleoprotein complex responsible for the synthesis of proteins in the cell. Part of the small subunit (SSU) processome, first precursor of the small eukaryotic ribosomal subunit. During the assembly of the SSU processome in the nucleolus, many ribosome biogenesis factors, an RNA chaperone and ribosomal proteins associate with the nascent pre-rRNA and work in concert to generate RNA folding, modifications, rearrangements and cleavage as well as targeted degradation of pre-ribosomal RNA by the RNA exosome. The protein is Small ribosomal subunit protein eS4 (rps4x) of Danio rerio (Zebrafish).